We begin with the raw amino-acid sequence, 77 residues long: Tachyplesin-2 (77 aa).

The signal sequence occupies residues 1 to 23 (MKKLVIALCLMMVLAVMVEEAEA). Intrachain disulfides connect Cys-26–Cys-39 and Cys-30–Cys-35. An Arginine amide modification is found at Arg-40. A propeptide spanning residues 41–77 (GKRNEVRQYRDRGYDVRAIPDETFFTRQDEDEDDDEE) is cleaved from the precursor.

It belongs to the tachyplesin/polyphemusin family. In terms of tissue distribution, hemocytes.

It localises to the secreted. Its function is as follows. Significantly inhibits the growth of Gram-negative and Gram-positive bacteria. The sequence is that of Tachyplesin-2 from Tachypleus tridentatus (Japanese horseshoe crab).